Here is a 425-residue protein sequence, read N- to C-terminus: Lysosome-associated membrane glycoprotein 2 (425 aa).

Residues 1 to 27 form the signal peptide; the sequence is MAPPRCPAGLALLLLLLGACGFFQSYA. Residues 28–192 form a first lumenal domain region; it reads VEVDVKDASN…SKKESRCYAD (165 aa). At 28 to 389 the chain is on the lumenal side; it reads VEVDVKDASN…EECFADSDLN (362 aa). Residues asparagine 37, asparagine 56, asparagine 62, asparagine 74, asparagine 100, asparagine 105, asparagine 120, asparagine 163, asparagine 170, asparagine 179, asparagine 206, asparagine 232, asparagine 239, asparagine 252, asparagine 276, asparagine 287, asparagine 298, asparagine 312, asparagine 320, and asparagine 331 are each glycosylated (N-linked (GlcNAc...) asparagine). Cysteine 40 and cysteine 78 are oxidised to a cystine. Cysteine 153 and cysteine 189 are oxidised to a cystine. The interval 193-238 is hinge; that stretch reads TPTAAPTVLPTVANVTTASTTISPAPTTAPKPAENPVTGNYSLKTG. Positions 239-390 are second lumenal domain; that stretch reads NKTCLLATVG…ECFADSDLNF (152 aa). The cysteines at positions 242 and 274 are disulfide-linked. Cysteine 345 and cysteine 382 form a disulfide bridge. The helical transmembrane segment at 390-414 threads the bilayer; it reads FLIPVAVGMALGFLIILVFISYIIG. Residues 415-425 lie on the Cytoplasmic side of the membrane; it reads RRKSRTGYQSV. The important for binding and subsequent lysosomal degradation of target proteins stretch occupies residues 416 to 419; sequence RKSR.

Belongs to the LAMP family. As to quaternary structure, monomer. Forms large homooligomers. Extensively N-glycosylated. Contains a minor proportion of O-linked glycans.

Its subcellular location is the lysosome membrane. The protein resides in the endosome membrane. It is found in the cell membrane. It localises to the cytoplasmic vesicle. The protein localises to the autophagosome membrane. In terms of biological role, lysosomal membrane glycoprotein which plays an important role in lysosome biogenesis, lysosomal pH regulation and autophagy. Plays an important role in chaperone-mediated autophagy, a process that mediates lysosomal degradation of proteins in response to various stresses and as part of the normal turnover of proteins with a long biological half-live. In the chaperone-mediated autophagy, acts downstream of chaperones, such as HSPA8/HSC70, which recognize and bind substrate proteins and mediate their recruitment to lysosomes, where target proteins bind LAMP2. Plays a role in lysosomal protein degradation in response to starvation. Required for the fusion of autophagosomes with lysosomes during autophagy. This is Lysosome-associated membrane glycoprotein 2 (LAMP2) from Gallus gallus (Chicken).